The sequence spans 494 residues: Cytochrome c-552 (494 aa).

The signal sequence occupies residues 1–31; that stretch reads MEKKLKSWQGWLLFGGTMVVVFVLGMIAASV. Histidine 116 is a binding site for heme c. The heme site is built by cysteine 144, cysteine 147, and lysine 148. Cysteine 182, cysteine 185, histidine 186, cysteine 224, cysteine 227, and histidine 228 together coordinate heme c. 4 residues coordinate Ca(2+): glutamate 230, tyrosine 231, lysine 276, and glutamine 278. Tyrosine 231 is a substrate binding site. Position 279 (histidine 279) interacts with substrate. The heme c site is built by histidine 290, cysteine 297, cysteine 300, histidine 301, histidine 315, cysteine 328, cysteine 331, histidine 332, and histidine 407.

This sequence belongs to the cytochrome c-552 family. It depends on Ca(2+) as a cofactor. The cofactor is heme c.

It localises to the periplasm. It catalyses the reaction 6 Fe(III)-[cytochrome c] + NH4(+) + 2 H2O = 6 Fe(II)-[cytochrome c] + nitrite + 8 H(+). It participates in nitrogen metabolism; nitrate reduction (assimilation). Catalyzes the reduction of nitrite to ammonia, consuming six electrons in the process. The protein is Cytochrome c-552 of Parabacteroides distasonis (strain ATCC 8503 / DSM 20701 / CIP 104284 / JCM 5825 / NCTC 11152).